The following is a 225-amino-acid chain: UPF0758 protein Spea_3837 (225 aa).

Positions Ile102 to Ile224 constitute an MPN domain. Zn(2+)-binding residues include His173, His175, and Asp186. The JAMM motif signature appears at His173–Asp186.

This sequence belongs to the UPF0758 family.

In Shewanella pealeana (strain ATCC 700345 / ANG-SQ1), this protein is UPF0758 protein Spea_3837.